Here is a 569-residue protein sequence, read N- to C-terminus: Arginine--tRNA ligase (569 aa).

Residues 123 to 133 carry the 'HIGH' region motif; it reads ANPNGPLHVGH.

The protein belongs to the class-I aminoacyl-tRNA synthetase family.

It is found in the cytoplasm. It carries out the reaction tRNA(Arg) + L-arginine + ATP = L-arginyl-tRNA(Arg) + AMP + diphosphate. This Methanosarcina mazei (strain ATCC BAA-159 / DSM 3647 / Goe1 / Go1 / JCM 11833 / OCM 88) (Methanosarcina frisia) protein is Arginine--tRNA ligase.